The primary structure comprises 350 residues: tRNA uridine(34) hydroxylase (350 aa).

The Rhodanese domain maps to 146–240 (DDPDALFIDM…YARKAREQGL (95 aa)). Cysteine 200 acts as the Cysteine persulfide intermediate in catalysis.

It belongs to the TrhO family.

It catalyses the reaction uridine(34) in tRNA + AH2 + O2 = 5-hydroxyuridine(34) in tRNA + A + H2O. Functionally, catalyzes oxygen-dependent 5-hydroxyuridine (ho5U) modification at position 34 in tRNAs, the first step in 5-carboxymethoxyuridine (cmo5U) biosynthesis. May be part of an alternate pathway, which is able to bypass cmo5U biogenesis in a subset of tRNAs under aerobic conditions. The chain is tRNA uridine(34) hydroxylase from Escherichia coli O17:K52:H18 (strain UMN026 / ExPEC).